A 617-amino-acid chain; its full sequence is Acyl-CoA dehydrogenase family member 11 (617 aa).

Residues 1–47 (MHRIGNAVRMASSSSANATITARHTQYSHAKTGGFSQTGPTLHNPYK) are disordered. Over residues 11-22 (ASSSSANATITA) the composition is skewed to low complexity. A compositionally biased stretch (polar residues) spans 23-41 (RHTQYSHAKTGGFSQTGPT). FAD contacts are provided by residues 206–215 (QWMTEKKGGS) and 241–243 (FSS). Ser-215 contacts substrate. The substrate site is built by Ser-267 and Arg-334. Residues Arg-359, 366–369 (QSKW), Glu-437, Gly-441, and 464–466 (EGT) contribute to the FAD site.

It belongs to the acyl-CoA dehydrogenase family. As to quaternary structure, homotetramer; dimer of dimers.

In terms of biological role, promotes adaption to elevated temperatures by regulating expression of the lipid desaturase, fat-7. Binds selectively and with high affinity to fatty acids with chain lengths from C10 to C12 and prevents them from activating fat-7 expression mediated by the nuclear hormone receptor nhr-49, leading to low levels of membrane lipid desaturation and membrane fluidity for adaption to heat. This is Acyl-CoA dehydrogenase family member 11 from Caenorhabditis elegans.